Reading from the N-terminus, the 479-residue chain is Bifunctional aspartate aminotransferase and glutamate/aspartate-prephenate aminotransferase (479 aa).

A chloroplast-targeting transit peptide spans 1–79 (MAATTTTSSS…VEVDISLSPR (79 aa)). Gly-111 is a binding site for L-aspartate. Residue 172–173 (AK) participates in pyridoxal 5'-phosphate binding. The L-aspartate site is built by Trp-197 and Asn-247. Residues Asn-247, Tyr-279, and 307–309 (GFS) each bind pyridoxal 5'-phosphate. Lys-310 is subject to N6-(pyridoxal phosphate)lysine. Residue Arg-318 participates in pyridoxal 5'-phosphate binding. Arg-449 contributes to the L-aspartate binding site.

Belongs to the class-I pyridoxal-phosphate-dependent aminotransferase family. In terms of assembly, homodimer. Requires pyridoxal 5'-phosphate as cofactor. In terms of tissue distribution, expressed in flowers, pistils, stamens, ovaries and at lower levels in leaves and sepals.

The protein localises to the plastid. The protein resides in the chloroplast. The catalysed reaction is L-aspartate + 2-oxoglutarate = oxaloacetate + L-glutamate. It carries out the reaction L-arogenate + oxaloacetate = prephenate + L-aspartate. The enzyme catalyses L-arogenate + 2-oxoglutarate = prephenate + L-glutamate. It functions in the pathway amino-acid biosynthesis; L-phenylalanine biosynthesis; L-arogenate from prephenate (L-Asp route): step 1/1. It participates in amino-acid biosynthesis; L-phenylalanine biosynthesis; L-arogenate from prephenate (L-Glu route): step 1/1. Prokaryotic-type aspartate aminotransferase. Also has a prenate transaminase activity. Involved in the aromatic amino acids biosynthesis pathway via the arogenate route. Required for the transamination of prephenate into arogenate. Can use 2-oxoglutarate, oxaloacetate and prephenate as substrates, but not phenylpyruvate or 4-hydroxyphenylpyruvate. This Petunia hybrida (Petunia) protein is Bifunctional aspartate aminotransferase and glutamate/aspartate-prephenate aminotransferase.